The primary structure comprises 213 residues: MLLLWQSRIMPGSEANIYITMTEYLLLLIGTVLVNNFVLVKFLGLCPFMGVSKKLETAIGMGLATTFVLTLASVCAYLVESYVLRPLGIEYLRTMSFILVIAVVVQFTEMVVHKTSPTLYRLLGIFLPLITTNCAVLGVALLNINENHNFIQSIIYGFGAAVGFSLVLILFASMRERIHVADVPAPFKGASIAMITAGLMSLAFMGFTGLVKL.

The Periplasmic segment spans residues 1–24; the sequence is MLLLWQSRIMPGSEANIYITMTEY. A helical transmembrane segment spans residues 25-45; the sequence is LLLLIGTVLVNNFVLVKFLGL. The Cytoplasmic portion of the chain corresponds to 46-58; the sequence is CPFMGVSKKLETA. The helical transmembrane segment at 59-79 threads the bilayer; sequence IGMGLATTFVLTLASVCAYLV. At 80–86 the chain is on the periplasmic side; that stretch reads ESYVLRP. The chain crosses the membrane as a helical span at residues 87-107; it reads LGIEYLRTMSFILVIAVVVQF. The Cytoplasmic segment spans residues 108–121; sequence TEMVVHKTSPTLYR. The helical transmembrane segment at 122-142 threads the bilayer; sequence LLGIFLPLITTNCAVLGVALL. Topologically, residues 143 to 153 are periplasmic; the sequence is NINENHNFIQS. The helical transmembrane segment at 154 to 174 threads the bilayer; it reads IIYGFGAAVGFSLVLILFASM. Residues 175-190 are Cytoplasmic-facing; sequence RERIHVADVPAPFKGA. Residues 191–211 traverse the membrane as a helical segment; it reads SIAMITAGLMSLAFMGFTGLV. Residues 212-213 lie on the Periplasmic side of the membrane; the sequence is KL.

It belongs to the NqrDE/RnfAE family. The complex is composed of six subunits: RnfA, RnfB, RnfC, RnfD, RnfE and RnfG.

The protein localises to the cell inner membrane. Functionally, part of a membrane-bound complex that couples electron transfer with translocation of ions across the membrane. This Vibrio cholerae serotype O1 (strain ATCC 39541 / Classical Ogawa 395 / O395) protein is Ion-translocating oxidoreductase complex subunit A.